Reading from the N-terminus, the 112-residue chain is Urease subunit beta (112 aa).

Belongs to the urease beta subunit family. As to quaternary structure, heterotrimer of UreA (gamma), UreB (beta) and UreC (alpha) subunits. Three heterotrimers associate to form the active enzyme.

It localises to the cytoplasm. The catalysed reaction is urea + 2 H2O + H(+) = hydrogencarbonate + 2 NH4(+). The protein operates within nitrogen metabolism; urea degradation; CO(2) and NH(3) from urea (urease route): step 1/1. The sequence is that of Urease subunit beta from Thioalkalivibrio sulfidiphilus (strain HL-EbGR7).